The chain runs to 338 residues: D-erythrose-4-phosphate dehydrogenase (338 aa).

NAD(+) is bound at residue 11–12 (RI). Substrate-binding positions include 153–155 (SCT), Arg199, 212–213 (TK), and Arg235. Cys154 serves as the catalytic Nucleophile. An NAD(+)-binding site is contributed by Asn317.

It belongs to the glyceraldehyde-3-phosphate dehydrogenase family. Epd subfamily. In terms of assembly, homotetramer.

The protein resides in the cytoplasm. The catalysed reaction is D-erythrose 4-phosphate + NAD(+) + H2O = 4-phospho-D-erythronate + NADH + 2 H(+). The protein operates within cofactor biosynthesis; pyridoxine 5'-phosphate biosynthesis; pyridoxine 5'-phosphate from D-erythrose 4-phosphate: step 1/5. Its function is as follows. Catalyzes the NAD-dependent conversion of D-erythrose 4-phosphate to 4-phosphoerythronate. The sequence is that of D-erythrose-4-phosphate dehydrogenase from Shewanella sp. (strain MR-4).